The primary structure comprises 268 residues: Ribosomal RNA small subunit methyltransferase A (268 aa).

S-adenosyl-L-methionine-binding residues include Asn18, Leu20, Gly45, Glu66, Asp91, and Asn112.

This sequence belongs to the class I-like SAM-binding methyltransferase superfamily. rRNA adenine N(6)-methyltransferase family. RsmA subfamily.

The protein resides in the cytoplasm. It carries out the reaction adenosine(1518)/adenosine(1519) in 16S rRNA + 4 S-adenosyl-L-methionine = N(6)-dimethyladenosine(1518)/N(6)-dimethyladenosine(1519) in 16S rRNA + 4 S-adenosyl-L-homocysteine + 4 H(+). Specifically dimethylates two adjacent adenosines (A1518 and A1519) in the loop of a conserved hairpin near the 3'-end of 16S rRNA in the 30S particle. May play a critical role in biogenesis of 30S subunits. This chain is Ribosomal RNA small subunit methyltransferase A, found in Shewanella baltica (strain OS223).